The following is a 487-amino-acid chain: GTPase Der (487 aa).

EngA-type G domains follow at residues P3–L166 and V201–T374. Residues G9–S16, D56–I60, N118–D121, G207–S214, D254–V258, and N319–D322 each bind GTP. A KH-like domain is found at K375–D459.

Belongs to the TRAFAC class TrmE-Era-EngA-EngB-Septin-like GTPase superfamily. EngA (Der) GTPase family. Associates with the 50S ribosomal subunit.

Functionally, GTPase that plays an essential role in the late steps of ribosome biogenesis. This Pseudoalteromonas translucida (strain TAC 125) protein is GTPase Der.